The chain runs to 389 residues: Probable L-tyrosine/L-aspartate decarboxylase (389 aa).

At lysine 233 the chain carries N6-(pyridoxal phosphate)lysine.

It belongs to the group II decarboxylase family. MfnA subfamily. Pyridoxal 5'-phosphate serves as cofactor.

The enzyme catalyses L-tyrosine + H(+) = tyramine + CO2. It catalyses the reaction L-aspartate + H(+) = beta-alanine + CO2. It participates in cofactor biosynthesis; methanofuran biosynthesis. It functions in the pathway cofactor biosynthesis; coenzyme A biosynthesis. Functionally, catalyzes the decarboxylation of L-tyrosine to produce tyramine for methanofuran biosynthesis. Can also catalyze the decarboxylation of L-aspartate to produce beta-alanine for coenzyme A (CoA) biosynthesis. This is Probable L-tyrosine/L-aspartate decarboxylase from Methanosphaera stadtmanae (strain ATCC 43021 / DSM 3091 / JCM 11832 / MCB-3).